The following is a 309-amino-acid chain: Putative HTH-type transcriptional regulatory protein AF_1787 (309 aa).

The HTH cro/C1-type domain occupies 131 to 185 (IREARERLGLSVGDMAKMLGVSRRTVKKYEEGTDTTLSTAAKIEEIIGTFAIKEI). Positions 142–161 (VGDMAKMLGVSRRTVKKYEE) form a DNA-binding region, H-T-H motif.

In Archaeoglobus fulgidus (strain ATCC 49558 / DSM 4304 / JCM 9628 / NBRC 100126 / VC-16), this protein is Putative HTH-type transcriptional regulatory protein AF_1787.